The primary structure comprises 278 residues: TnpB-like protein MJ0751 (278 aa).

Zn(2+) contacts are provided by Cys222, Cys225, Cys239, and Cys242.

It in the N-terminal section; belongs to the transposase 2 family. This sequence in the C-terminal section; belongs to the transposase 35 family.

In Methanocaldococcus jannaschii (strain ATCC 43067 / DSM 2661 / JAL-1 / JCM 10045 / NBRC 100440) (Methanococcus jannaschii), this protein is TnpB-like protein MJ0751.